Here is a 216-residue protein sequence, read N- to C-terminus: MAEEPVVIGDPAPRTRKWPIVVGVVVVVLIAAGAGFWVWHEQPSFCAAICHTPMDEYLETYEQEAGTAGVDKWGNEVANTNAMLAVSHKAQGKDCMACHVPTLSEQMSEGMNWVTGNYVYPLEERDTEMLTEARGVDADEFCLNESCHNLTRDDLIKATSDMEFNPHQPQHGEIECSECHKAHRASVMYCTQCHSEAEVPEGWLTVAEANKLSTAA.

A helical membrane pass occupies residues 18-38 (WPIVVGVVVVVLIAAGAGFWV). Residues cysteine 46, cysteine 50, histidine 51, cysteine 95, cysteine 98, histidine 99, cysteine 142, cysteine 147, histidine 148, cysteine 176, cysteine 179, histidine 180, cysteine 190, cysteine 193, and histidine 194 each contribute to the heme site.

The protein belongs to the multiheme cytochrome c family. As to quaternary structure, may form a membrane-associated complex with Cgr2. Binds 5 heme groups per subunit.

The protein resides in the cell membrane. Probably transfers electrons from a membrane-associated electron donor (e.g. the membrane quinone pool) to the [4Fe-4S] cluster of the Cgr2 reductase via its covalently bound heme groups. The chain is Cytochrome c-type protein Cgr1 from Eggerthella lenta (strain ATCC 25559 / DSM 2243 / CCUG 17323 / JCM 9979 / KCTC 3265 / NCTC 11813 / VPI 0255 / 1899 B) (Eubacterium lentum).